Consider the following 272-residue polypeptide: NH(3)-dependent NAD(+) synthetase (272 aa).

Y33 is a deamido-NAD(+) binding site. Residues 45–52, R79, and Q85 contribute to the ATP site; that span reads GISGGQDS. A Mg(2+)-binding site is contributed by D51. R138 contacts deamido-NAD(+). T158 contacts ATP. Mg(2+) is bound at residue E163. Deamido-NAD(+)-binding residues include K171 and D178. The ATP site is built by K187 and T209. Residues E224 and 258–259 each bind deamido-NAD(+); that span reads HK.

This sequence belongs to the NAD synthetase family. Homodimer. Post-translationally, phosphorylated during sporulation.

The catalysed reaction is deamido-NAD(+) + NH4(+) + ATP = AMP + diphosphate + NAD(+) + H(+). Its pathway is cofactor biosynthesis; NAD(+) biosynthesis; NAD(+) from deamido-NAD(+) (ammonia route): step 1/1. Catalyzes the ATP-dependent amidation of deamido-NAD to form NAD. Uses ammonia as a nitrogen source. This is NH(3)-dependent NAD(+) synthetase from Bacillus subtilis (strain 168).